The chain runs to 237 residues: Uridylate kinase (237 aa).

ATP is bound at residue 12 to 15; sequence KLSG. The segment at 20–25 is involved in allosteric activation by GTP; the sequence is GEDGLG. G54 serves as a coordination point for UMP. ATP is bound by residues G55 and R59. UMP is bound by residues D74 and 135–142; that span reads TGNPFFTT. The ATP site is built by T162, Y168, and D171.

The protein belongs to the UMP kinase family. Homohexamer.

It is found in the cytoplasm. The enzyme catalyses UMP + ATP = UDP + ADP. Its pathway is pyrimidine metabolism; CTP biosynthesis via de novo pathway; UDP from UMP (UMPK route): step 1/1. Its activity is regulated as follows. Allosterically activated by GTP. Inhibited by UTP. Catalyzes the reversible phosphorylation of UMP to UDP. This is Uridylate kinase (pyrH) from Haemophilus influenzae (strain ATCC 51907 / DSM 11121 / KW20 / Rd).